The chain runs to 478 residues: 9-divinyl ether synthase (478 aa).

Cys431 contributes to the heme binding site.

This sequence belongs to the cytochrome P450 family. 9-divinyl ether synthase subfamily.

The catalysed reaction is (9S)-hydroperoxy-(10E,12Z)-octadecadienoate = colneleate + H2O. Functionally, involved in the biosynthesis of the anti-fungal toxins colneleic acid and colnelenic acid. In Capsicum annuum (Capsicum pepper), this protein is 9-divinyl ether synthase (DES).